Reading from the N-terminus, the 156-residue chain is ATP synthase subunit b (156 aa).

The chain crosses the membrane as a helical span at residues 7-27 (LFAQMVVFLILAWFTMKFVWP).

Belongs to the ATPase B chain family. F-type ATPases have 2 components, F(1) - the catalytic core - and F(0) - the membrane proton channel. F(1) has five subunits: alpha(3), beta(3), gamma(1), delta(1), epsilon(1). F(0) has three main subunits: a(1), b(2) and c(10-14). The alpha and beta chains form an alternating ring which encloses part of the gamma chain. F(1) is attached to F(0) by a central stalk formed by the gamma and epsilon chains, while a peripheral stalk is formed by the delta and b chains.

The protein localises to the cell inner membrane. F(1)F(0) ATP synthase produces ATP from ADP in the presence of a proton or sodium gradient. F-type ATPases consist of two structural domains, F(1) containing the extramembraneous catalytic core and F(0) containing the membrane proton channel, linked together by a central stalk and a peripheral stalk. During catalysis, ATP synthesis in the catalytic domain of F(1) is coupled via a rotary mechanism of the central stalk subunits to proton translocation. Its function is as follows. Component of the F(0) channel, it forms part of the peripheral stalk, linking F(1) to F(0). In Paraburkholderia phytofirmans (strain DSM 17436 / LMG 22146 / PsJN) (Burkholderia phytofirmans), this protein is ATP synthase subunit b.